Consider the following 209-residue polypeptide: Small ribosomal subunit protein uS4 (209 aa).

The disordered stretch occupies residues Ser23–Asp46. In terms of domain architecture, S4 RNA-binding spans Cys93–Leu156.

This sequence belongs to the universal ribosomal protein uS4 family. As to quaternary structure, part of the 30S ribosomal subunit. Contacts protein S5. The interaction surface between S4 and S5 is involved in control of translational fidelity.

Functionally, one of the primary rRNA binding proteins, it binds directly to 16S rRNA where it nucleates assembly of the body of the 30S subunit. In terms of biological role, with S5 and S12 plays an important role in translational accuracy. The sequence is that of Small ribosomal subunit protein uS4 from Chlamydia felis (strain Fe/C-56) (Chlamydophila felis).